The primary structure comprises 324 residues: MNSLVALVLLGQIIGSTVSFQLGPNMDCNTKGTKDWADIGVHYINEHKLHGYKQALNVIKIFRLLPSDGRSVIFHFNLNLLETECHVLDSTPVENCTVRPQHNHAVEMDCNVRIIHDITTFEDEVFVKCSSTPGSVENILRDCPKCPILLSPNDPHVVDSVEYVLNKHNEKLSGHIYEVLEISRGQHKYEPEAYYLEFVIVEINCTAQEAHDDYHQCHPYTAGEDHIAFCRSTVFRSHASLEKPKDEKFESDCVILDVKEGHAHSHLIEHHVGKYSTSPGYNSTDECVVECPVAFVNKEVPTDISDHNTPPVKGCPGRVLHFQL.

The first 19 residues, 1–19, serve as a signal peptide directing secretion; it reads MNSLVALVLLGQIIGSTVS. 2 Cystatin fetuin-A-type domains span residues 21–130 and 141–254; these read QLGP…VKCS and RDCP…SDCV. Disulfide bonds link Cys-28–Cys-315, Cys-85–Cys-96, Cys-110–Cys-129, Cys-143–Cys-146, Cys-205–Cys-217, and Cys-230–Cys-253. Asn-95 carries N-linked (GlcNAc...) asparagine glycosylation. N-linked (GlcNAc...) asparagine glycosylation occurs at Asn-204. The N-linked (GlcNAc...) asparagine glycan is linked to Asn-282.

This sequence belongs to the fetuin family. In terms of assembly, homodimer. In terms of tissue distribution, expressed by the liver.

It is found in the secreted. Its function is as follows. May not have antihemorrhagic activity. This chain is HSF-like protein, found in Protobothrops flavoviridis (Habu).